Consider the following 1357-residue polypeptide: DNA-directed RNA polymerase subunit beta (1357 aa).

It belongs to the RNA polymerase beta chain family. In terms of assembly, the RNAP catalytic core consists of 2 alpha, 1 beta, 1 beta' and 1 omega subunit. When a sigma factor is associated with the core the holoenzyme is formed, which can initiate transcription.

The enzyme catalyses RNA(n) + a ribonucleoside 5'-triphosphate = RNA(n+1) + diphosphate. Functionally, DNA-dependent RNA polymerase catalyzes the transcription of DNA into RNA using the four ribonucleoside triphosphates as substrates. This is DNA-directed RNA polymerase subunit beta from Pseudomonas putida (strain ATCC 700007 / DSM 6899 / JCM 31910 / BCRC 17059 / LMG 24140 / F1).